Consider the following 349-residue polypeptide: Phenylalanine--tRNA ligase alpha subunit (349 aa).

Glu-258 contacts Mg(2+).

This sequence belongs to the class-II aminoacyl-tRNA synthetase family. Phe-tRNA synthetase alpha subunit type 1 subfamily. In terms of assembly, tetramer of two alpha and two beta subunits. Mg(2+) serves as cofactor.

The protein resides in the cytoplasm. It carries out the reaction tRNA(Phe) + L-phenylalanine + ATP = L-phenylalanyl-tRNA(Phe) + AMP + diphosphate + H(+). The protein is Phenylalanine--tRNA ligase alpha subunit of Rickettsia africae (strain ESF-5).